A 311-amino-acid chain; its full sequence is Ketoisovalerate oxidoreductase subunit VorB (311 aa).

In terms of assembly, heterotetramer of one alpha, one beta, one delta and one gamma chain.

It catalyses the reaction 3-methyl-2-oxobutanoate + 2 oxidized [2Fe-2S]-[ferredoxin] + CoA = 2-methylpropanoyl-CoA + 2 reduced [2Fe-2S]-[ferredoxin] + CO2 + H(+). This Pyrococcus furiosus (strain ATCC 43587 / DSM 3638 / JCM 8422 / Vc1) protein is Ketoisovalerate oxidoreductase subunit VorB (vorB).